A 292-amino-acid chain; its full sequence is G1/S-specific cyclin-D3 (292 aa).

Positions 27 to 152 (VLQSLLRLEE…LVLGKLKWDL (126 aa)) constitute a Cyclin N-terminal domain. The interval 255–292 (LREAAQTSPSPAPKAPRGSSSQGPSQTSTPTDVTAIHL) is disordered. S264 and S279 each carry phosphoserine. Residues 272 to 285 (GSSSQGPSQTSTPT) are compositionally biased toward low complexity. T283 is subject to Phosphothreonine.

This sequence belongs to the cyclin family. Cyclin D subfamily. In terms of assembly, interacts with the CDK4 and CDK6 protein kinases to form a serine/threonine kinase holoenzyme complex. The cyclin subunit imparts substrate specificity to the complex. Interacts with ATF5. Interacts with EIF3K. Component of the ternary complex cyclin D/CDK4/CDKN1B required for nuclear translocation and modulation of CDK4-mediated kinase activity. Can form similar complexes with either CDKN1A or CDKN2A. Post-translationally, phosphorylation at Thr-283 by MAP kinases is required for ubiquitination and degradation by the DCX(AMBRA1) complex. Ubiquitinated by the DCX(AMBRA1) complex during the transition from G1 to S cell phase, leading to its degradation: ubiquitination is dependent on Thr-283 phosphorylation. The DCX(AMBRA1) complex represents the major regulator of CCND3 stability during the G1/S transition. Polyubiquitinated by the SCF(FBXL2) complex, leading to proteasomal degradation.

Its subcellular location is the nucleus. The protein localises to the cytoplasm. Regulatory component of the cyclin D3-CDK4 (DC) complex that phosphorylates and inhibits members of the retinoblastoma (RB) protein family including RB1 and regulates the cell-cycle during G(1)/S transition. Phosphorylation of RB1 allows dissociation of the transcription factor E2F from the RB/E2F complex and the subsequent transcription of E2F target genes which are responsible for the progression through the G(1) phase. Hypophosphorylates RB1 in early G(1) phase. Cyclin D-CDK4 complexes are major integrators of various mitogenenic and antimitogenic signals. Component of the ternary complex, cyclin D3/CDK4/CDKN1B, required for nuclear translocation and activity of the cyclin D-CDK4 complex. Shows transcriptional coactivator activity with ATF5 independently of CDK4. The polypeptide is G1/S-specific cyclin-D3 (CCND3) (Bos taurus (Bovine)).